A 240-amino-acid polypeptide reads, in one-letter code: Glyceraldehyde 3-phosphate phosphatase (240 aa).

This sequence belongs to the HAD-like hydrolase superfamily. Requires Mg(2+) as cofactor.

Functionally, catalyzes the dephosphorylation of D,L-glyceraldehyde 3-phosphate in vitro. The sequence is that of Glyceraldehyde 3-phosphate phosphatase from Pyrococcus furiosus (strain ATCC 43587 / DSM 3638 / JCM 8422 / Vc1).